Here is a 163-residue protein sequence, read N- to C-terminus: Large ribosomal subunit protein mL59 (163 aa).

The tract at residues 33–53 is disordered; the sequence is PAGADPETHKTPYQEESPNPF.

The protein belongs to the mitochondrion-specific ribosomal protein mL59 family. As to quaternary structure, component of the mitochondrial large ribosomal subunit (mt-LSU). Mature N.crassa 74S mitochondrial ribosomes consist of a small (37S) and a large (54S) subunit. The 37S small subunit contains a 16S ribosomal RNA (16S mt-rRNA) and 32 different proteins. The 54S large subunit contains a 23S rRNA (23S mt-rRNA) and 42 different proteins.

It is found in the mitochondrion. Component of the mitochondrial ribosome (mitoribosome), a dedicated translation machinery responsible for the synthesis of mitochondrial genome-encoded proteins, including at least some of the essential transmembrane subunits of the mitochondrial respiratory chain. The mitoribosomes are attached to the mitochondrial inner membrane and translation products are cotranslationally integrated into the membrane. In Neurospora crassa (strain ATCC 24698 / 74-OR23-1A / CBS 708.71 / DSM 1257 / FGSC 987), this protein is Large ribosomal subunit protein mL59 (mrpl25).